We begin with the raw amino-acid sequence, 650 residues long: MIEENKHFEKKMQEYDASQIQVLEGLEAVRMRPGMYIGSTAKEGLHHLVWEIVDNSIDEALAGFASHIKVFIEADNSITVVDDGRGIPVDIQVKTGRPAVETVFTVLHAGGKFGGGSYKVSGGLHGVGSSVVNALSTQLDVRVYKNGQIHYQEFKRGAVVADLEVIGTTDVTGTTVHFTPDPEIFTETTQFDYSVLAKRIQELAFLNRGLKISITDKRSGMEQEEHFHYEGGIGSYVEFLNDKKDVIFETPIYTDGELEGIAVEVAMQYTTSYQETVMSFANNIHTHEGGTHEQGFRAALTRVINDYAKKNKILKENEDNLTGEDVREGLTAVISVKHPNPQFEGQTKTKLGNSEVVKITNRLFSEAFQRFLLENPQVARKIVEKGILASKARIAAKRAREVTRKKSGLEISNLPGKLADCSSNDANQNELFIVEGDSAGGSAKSGRNREFQAILPIRGKILNVEKATMDKILANEEIRSLFTAMGTGFGADFDVSKARYQKLVIMTDADVDGAHIRTLLLTLIYRFMRPVLEAGYVYIAQPPIYGVKVGSEIKEYIQPGIDQEDQLKTALEKYSIGRSKPTVQRYKGLGEMDDHQLWETTMDPENRLMARVTVDDAAEADKVFDMLMGDRVEPRRDFIEENAVYSTLDI.

Residues Asn429 to Pro543 form the Toprim domain. Mg(2+)-binding residues include Glu435, Asp508, and Asp510.

Belongs to the type II topoisomerase GyrB family. In terms of assembly, heterotetramer, composed of two GyrA and two GyrB chains. In the heterotetramer, GyrA contains the active site tyrosine that forms a transient covalent intermediate with DNA, while GyrB binds cofactors and catalyzes ATP hydrolysis. It depends on Mg(2+) as a cofactor. Mn(2+) is required as a cofactor. The cofactor is Ca(2+).

It is found in the cytoplasm. The catalysed reaction is ATP-dependent breakage, passage and rejoining of double-stranded DNA.. Its function is as follows. A type II topoisomerase that negatively supercoils closed circular double-stranded (ds) DNA in an ATP-dependent manner to modulate DNA topology and maintain chromosomes in an underwound state. Negative supercoiling favors strand separation, and DNA replication, transcription, recombination and repair, all of which involve strand separation. Also able to catalyze the interconversion of other topological isomers of dsDNA rings, including catenanes and knotted rings. Type II topoisomerases break and join 2 DNA strands simultaneously in an ATP-dependent manner. The polypeptide is DNA gyrase subunit B (Streptococcus pyogenes serotype M3 (strain ATCC BAA-595 / MGAS315)).